Here is a 342-residue protein sequence, read N- to C-terminus: MNHSLKPWNTFGIDHNAQHIVCAEDEQQLLNAWQYATAEGQPVLILGEGSNVLFLEDYRGTVIINRIKGIEIHDEPDAWYLHVGAGENWHRLVKYTLQEGMPGLENLALIPGCVGSSPIQNIGAYGVELQRVCAYVDCVELATGKQVRLTAKECRFGYRDSIFKHEYQDRFAIVAVGLRLLKEWQPVLTYGDLTRLDPTTVTPQQVFNAVCHMRTTKLPDPKVNGNAGSFFKNPVVSAETAKALLAQFPTAPNYPQAGGSVKLAAGWLIDQCQLKGMQMGGAAVHRQQALVLINEDNAKSEDVVQLAHHVRQKVGEKFNVWLEPEVRFIGASGEVSAVETIS.

Residues 13-183 (IDHNAQHIVC…VAVGLRLLKE (171 aa)) enclose the FAD-binding PCMH-type domain. The active site involves Arg159. Ser229 functions as the Proton donor in the catalytic mechanism. Residue Glu325 is part of the active site.

Belongs to the MurB family. It depends on FAD as a cofactor.

Its subcellular location is the cytoplasm. The catalysed reaction is UDP-N-acetyl-alpha-D-muramate + NADP(+) = UDP-N-acetyl-3-O-(1-carboxyvinyl)-alpha-D-glucosamine + NADPH + H(+). The protein operates within cell wall biogenesis; peptidoglycan biosynthesis. Functionally, cell wall formation. The chain is UDP-N-acetylenolpyruvoylglucosamine reductase from Shigella boydii serotype 4 (strain Sb227).